Consider the following 225-residue polypeptide: Urease accessory protein UreG 2 (225 aa).

31–38 (GPVGSGKT) serves as a coordination point for GTP.

This sequence belongs to the SIMIBI class G3E GTPase family. UreG subfamily. Homodimer. UreD, UreF and UreG form a complex that acts as a GTP-hydrolysis-dependent molecular chaperone, activating the urease apoprotein by helping to assemble the nickel containing metallocenter of UreC. The UreE protein probably delivers the nickel.

The protein localises to the cytoplasm. In terms of biological role, facilitates the functional incorporation of the urease nickel metallocenter. This process requires GTP hydrolysis, probably effectuated by UreG. The chain is Urease accessory protein UreG 2 from Streptomyces griseus subsp. griseus (strain JCM 4626 / CBS 651.72 / NBRC 13350 / KCC S-0626 / ISP 5235).